The following is a 493-amino-acid chain: Glutamyl-tRNA(Gln) amidotransferase subunit A (493 aa).

Residues lysine 81 and serine 156 each act as charge relay system in the active site. Serine 180 (acyl-ester intermediate) is an active-site residue.

Belongs to the amidase family. GatA subfamily. In terms of assembly, heterotrimer of A, B and C subunits.

It catalyses the reaction L-glutamyl-tRNA(Gln) + L-glutamine + ATP + H2O = L-glutaminyl-tRNA(Gln) + L-glutamate + ADP + phosphate + H(+). Functionally, allows the formation of correctly charged Gln-tRNA(Gln) through the transamidation of misacylated Glu-tRNA(Gln) in organisms which lack glutaminyl-tRNA synthetase. The reaction takes place in the presence of glutamine and ATP through an activated gamma-phospho-Glu-tRNA(Gln). The chain is Glutamyl-tRNA(Gln) amidotransferase subunit A from Mycobacterium ulcerans (strain Agy99).